A 331-amino-acid polypeptide reads, in one-letter code: MSVEIKTNTVDPIRQTYGNLQRRFGDKPASRYQEASYDIEAVTNFHYRPLWDPQHELHDPTRTAIRMTDWHKVTDPRQFYYGAYVQTRARMQEATEHAYGFCEKRELLSRLPAELQAKLLRCLVPLRHAELGANMNNSSIAGDSIAATVTQMHIYQAMDRLGMGQYLSRIGLLLDGGTGEALDQAKAYWLDDPIWQGLRRYVEDSFVIRDWFELGLAQNLVLDGLLQPLMYQRFDQWLTENGGSDVAMLTEFMRDWYGESTRWVDAMFKTVLAENDANREQVQAWLEVWEPRAYEALLPLAEEATGIAALDEVRSAFATRLQKIGLKSREE.

It belongs to the TmoE/XamoE family. As to quaternary structure, the multicomponent enzyme phenol hydroxylase is formed by DmpL (P1 component), DmpM (P2 component), DmpN (P3 component), DmpO (P4 component) and DmpP (P5 component). The oxygenase component is a dimer composed of three subunits, DmpL, DmpN and DmpO (DmpLNO). DmpL interacts with the auxiliary protein DmpK (P0 component).

It carries out the reaction phenol + NADH + O2 + H(+) = catechol + NAD(+) + H2O. It participates in aromatic compound metabolism; phenol degradation. With respect to regulation, requires DmpM for efficient turnover. The activity of DmpLNO oxygenase is inhibited by dithiothreitol (DTT) by a mechanism apparently involving H(2)O(2) generation. Part of a multicomponent enzyme which catalyzes the degradation of phenol and some of its methylated derivatives. DmpL, DmpN and DmpO form the oxygenase component of the complex. Required for growth on phenol and for in vitro phenol hydroxylase activity. The protein is Phenol 2-monooxygenase, oxygenase component DmpL of Pseudomonas sp. (strain CF600).